The following is a 63-amino-acid chain: Bowman-birk type proteinase inhibitor 2 (63 aa).

Intrachain disulfides connect Cys-7–Cys-61, Cys-8–Cys-23, Cys-11–Cys-57, Cys-13–Cys-21, Cys-31–Cys-38, Cys-35–Cys-50, and Cys-40–Cys-48.

Belongs to the Bowman-Birk serine protease inhibitor family. In terms of assembly, exists as a dimer in its native form.

Its function is as follows. Inhibits trypsin, chymotrypsin, plasmin and factor XIIa. Does not inhibit factor Xa, thrombin, human plasma kallikrein, porcine pancreatic kallikrein and human urinary kallikrein. The chain is Bowman-birk type proteinase inhibitor 2 from Amburana cearensis (Cerejeira).